The chain runs to 277 residues: Phosphoenolpyruvate synthase regulatory protein (277 aa).

An ADP-binding site is contributed by 157–164; the sequence is GVSRCGKT.

This sequence belongs to the pyruvate, phosphate/water dikinase regulatory protein family. PSRP subfamily.

The catalysed reaction is [pyruvate, water dikinase] + ADP = [pyruvate, water dikinase]-phosphate + AMP + H(+). The enzyme catalyses [pyruvate, water dikinase]-phosphate + phosphate + H(+) = [pyruvate, water dikinase] + diphosphate. Functionally, bifunctional serine/threonine kinase and phosphorylase involved in the regulation of the phosphoenolpyruvate synthase (PEPS) by catalyzing its phosphorylation/dephosphorylation. The polypeptide is Phosphoenolpyruvate synthase regulatory protein (Escherichia coli O7:K1 (strain IAI39 / ExPEC)).